Reading from the N-terminus, the 267-residue chain is Cilia- and flagella-associated protein 300 (267 aa).

The protein belongs to the CFAP300 family.

It localises to the cytoplasm. The protein localises to the cytoskeleton. Its subcellular location is the cilium axoneme. In terms of biological role, cilium- and flagellum-specific protein that plays a role in axonemal structure organization and motility. May play a role in outer and inner dynein arm assembly. This Xenopus tropicalis (Western clawed frog) protein is Cilia- and flagella-associated protein 300.